The following is an 836-amino-acid chain: MSDTDGKKPLGLGGGSRSGQVKQSFSHGRTKSVLVETKRKRVVVPKPGASGSSTTTSSPSHLGDPAKRPAGISDAEMERRLAALRAAKLREVEDAKRRADEERQREEERQRRREELEAKEREERERAEALRQKAEDEERARREAEEATRRAEEAKRAPAPAAPQPAPAESRASAPPSAKPGLPPSRKEREREADRDRTTKKDDSRRSGKLTLNEALSGEGGRTRSLAAMKRKQEKARQKAMGFGHKAEKQVRDVQLPETILVQELANRMAERAADVVKALMKMGMMVTMNQSIDADTAELVIEEFGHRAVRVSDADVEHVIDTVEDKAEDLQPRPPIITIMGHVDHGKTSLLDAIRKTSVVSGEAGGITQHIGAYQVKTESGAVLTFLDTPGHAAFTSMRARGAQVTDIVVLVVAADDAVMPQTVEAIKHAKAAKVPMIVAINKIDKPDADPNKVRTDLLQHEVIVEKMSGDVLDVEVSAKTGLGLDELLENIALQAEILDLRANPSRQAQGAVIEAKLDVGRGPVATVLVQYGTLKRGDIFVVGQQWGKVRALINDKGERVDEAGPSVPVEVLGLNGTPEAGDVLNVVETEAQAREIADYREKAARDKRAAAGAATTLEQLMAKAKADADVAELPVVIKADVQGSAEAIVQALEKVGNDEVRVRVLHYGVGAITETDITLAEASQAAVIGFNVRANASARQAANQKSVEIRYYSVIYDLVDDVKKAASGLLKAEVREHFIGYAQIKEVFRITGVGNVAGCIVTEGVARRSAGVRLLRDNVVIHEGTLKTLKRFKDEVKEVQSGQECGMAFERYEDIRPGDVIEIFEREEVQRKLA.

Residues 1–234 (MSDTDGKKPL…SLAAMKRKQE (234 aa)) form a disordered region. The segment covering 18 to 27 (SGQVKQSFSH) has biased composition (polar residues). Over residues 50-60 (SGSSTTTSSPS) the composition is skewed to low complexity. Basic and acidic residues predominate over residues 88–156 (KLREVEDAKR…ATRRAEEAKR (69 aa)). Low complexity predominate over residues 167 to 176 (PAESRASAPP). The span at 185 to 206 (SRKEREREADRDRTTKKDDSRR) shows a compositional bias: basic and acidic residues. A tr-type G domain is found at 333 to 501 (PRPPIITIMG…NIALQAEILD (169 aa)). A G1 region spans residues 342–349 (GHVDHGKT). 342–349 (GHVDHGKT) is a binding site for GTP. Residues 367–371 (GITQH) are G2. Residues 389 to 392 (DTPG) form a G3 region. GTP contacts are provided by residues 389-393 (DTPGH) and 443-446 (NKID). Positions 443–446 (NKID) are G4. The G5 stretch occupies residues 479–481 (SAK).

It belongs to the TRAFAC class translation factor GTPase superfamily. Classic translation factor GTPase family. IF-2 subfamily.

It localises to the cytoplasm. One of the essential components for the initiation of protein synthesis. Protects formylmethionyl-tRNA from spontaneous hydrolysis and promotes its binding to the 30S ribosomal subunits. Also involved in the hydrolysis of GTP during the formation of the 70S ribosomal complex. This is Translation initiation factor IF-2 from Cereibacter sphaeroides (strain ATCC 17029 / ATH 2.4.9) (Rhodobacter sphaeroides).